Reading from the N-terminus, the 1491-residue chain is MEPSVDANSITITVEGMTCISCVRTIEQQIGKVNGVHHIKVSLEEKSATIIYDPKLQTPKTLQEAIDDMGFDALLHNANPLPVLTNTVFLTVTAPLTLPWDHIQSTLLKTKGVTGVKISPQQRSAVVTIIPSVVSASQIVELVPDLSLDMGTQEKKSGACEEHSTPQAGEVMLKMKVEGMTCHSCTSTIEGKVGKLQGVQRIKVSLDNQEATIVFQPHLITAEEIKKQIEAVGFPAFIKKQPKYLKLGAIDVERLKNTPVKSSEGSQQKSPSYPSDSTTMFTIEGMHCKSCVSNIESALSTLQYVSSIVVSLENRSAIVKYNASLVTPEMLRKAIEAISPGQYRVSIASEVESTASSPSSSSLQKMPLNIVSQPLTQEAVININGMTCNSCVQSIEGVISKKPGVKSIHVSLANSTGTIEFDPLLTSPETLREAIEDMGFDAALPDMKEPLVVIAQPSLETPLLPSSNELENVMTSVQNKCYIQVSGMTCASCVANIERNLRREEGIYSVLVALMAGKAEVRYNPAVIQPRVIAEFIRELGFGAMVMENAGEGNGILELVVRGMTCASCVHKIESTLTKHKGIFYCSVALATNKAHIKYDPEIIGPRDIIHTIGSLGFEASLVKKDRSANHLDHKREIKQWRGSFLVSLFFCIPVMGLMVYMMVMDHHLATLHHNQNMSNEEMINMHSAMFLERQILPGLSIMNLLSLLLCLPVQFCGGWYFYIQAYKALKHKTANMDVLIVLATTIAFAYSLVILLVAMFERAKVNPITFFDTPPMLFVFIALGRWLEHIAKGKTSEALAKLISLQATEATIVTLNSENLLLSEEQVDVELVQRGDIIKVVPGGKFPVDGRVIEGHSMVDESLITGEAMPVAKKPGSTVIAGSINQNGSLLIRATHVGADTTLSQIVKLVEEAQTSKAPIQQFADKLSGYFVPFIVLVSIVTLLVWIIIGFQNFEIVETYFPGYNRSISRTETIIRFAFQASITVLCIACPCSLGLATPTAVMVGTGVGAQNGILIKGGEPLEMAHKVKVVVFDKTGTITHGTPVVNQVKVLVESNKISRNKILAIVGTAESNSEHPLGAAVTKYCKKELDTETLGTCTDFQVVPGCGISCKVTNIEGLLHKSNLKIEENNIKNASLVQIDAINEQSSTSSSMIIDAHLSNAVNTQQYKVLIGNREWMIRNGLVISNDVDESMIEHERRGRTAVLVTIDDELCGLIAIADTVKPEAELAVHILKSMGLEVVLMTGDNSKTARSIASQVGITKVFAEVLPSHKVAKVKQLQEEGKRVAMVGDGINDSPALAMANVGIAIGTGTDVAIEAADVVLIRNDLLDVVASIDLSRKTVKRIRINFVFALIYNLVGIPIAAGVFLPIGLVLQPWMGSAAMAASSVSVVLSSLFLKLYRKPTYDNYELHPRSHTGQRSPSEISVHVGIDDTSRNSPRLGLLDRIVNYSRASINSLLSDKRSLNSVVTSEPDKHSLLVGDFREDDDTTL.

Over 1–644 (MEPSVDANSI…KREIKQWRGS (644 aa)) the chain is Cytoplasmic. HMA domains lie at 8–74 (NSIT…FDAL) and 85–151 (TNTV…LDMG). Thr-18, Cys-19, and Cys-22 together coordinate Cu(+). Thr-152 bears the Phosphothreonine mark. Residues 171 to 237 (VMLKMKVEGM…QIEAVGFPAF (67 aa)) form the HMA 3 domain. Cu(+) is bound by residues Cys-182 and Cys-185. Residue Ser-270 is modified to Phosphoserine. The region spanning 277 to 343 (STTMFTIEGM…AIEAISPGQY (67 aa)) is the HMA 4 domain. 2 residues coordinate Cu(+): Cys-288 and Cys-291. The residue at position 327 (Thr-327) is a Phosphothreonine. 4 positions are modified to phosphoserine: Ser-339, Ser-353, Ser-357, and Ser-362. HMA domains follow at residues 377–443 (QEAV…FDAA), 479–545 (NKCY…FGAM), and 555–621 (GILE…FEAS). Cu(+)-binding residues include Cys-388, Cys-391, Cys-490, Cys-493, Cys-566, and Cys-569. A helical membrane pass occupies residues 645 to 666 (FLVSLFFCIPVMGLMVYMMVMD). The Extracellular segment spans residues 667 to 705 (HHLATLHHNQNMSNEEMINMHSAMFLERQILPGLSIMNL). Residue Asn-677 is glycosylated (N-linked (GlcNAc...) asparagine). The chain crosses the membrane as a helical span at residues 706–725 (LSLLLCLPVQFCGGWYFYIQ). Residues 726–732 (AYKALKH) are Cytoplasmic-facing. The helical transmembrane segment at 733 to 753 (KTANMDVLIVLATTIAFAYSL) threads the bilayer. The Extracellular portion of the chain corresponds to 754-772 (VILLVAMFERAKVNPITFF). Residues 773 to 793 (DTPPMLFVFIALGRWLEHIAK) traverse the membrane as a helical segment. Residues 794–926 (GKTSEALAKL…SKAPIQQFAD (133 aa)) lie on the Cytoplasmic side of the membrane. Residues 927–950 (KLSGYFVPFIVLVSIVTLLVWIII) form a helical membrane-spanning segment. The Extracellular portion of the chain corresponds to 951 to 980 (GFQNFEIVETYFPGYNRSISRTETIIRFAF). N-linked (GlcNAc...) asparagine glycosylation occurs at Asn-966. A helical membrane pass occupies residues 981–1002 (QASITVLCIACPCSLGLATPTA). Over 1003 to 1347 (VMVGTGVGAQ…LSRKTVKRIR (345 aa)) the chain is Cytoplasmic. Residue Asp-1035 is the 4-aspartylphosphate intermediate of the active site. Position 1072 (Glu-1072) interacts with ATP. At Thr-1203 the chain carries Phosphothreonine. 2 residues coordinate Mg(2+): Asp-1292 and Asp-1296. A helical membrane pass occupies residues 1348–1365 (INFVFALIYNLVGIPIAA). The Extracellular portion of the chain corresponds to 1366–1376 (GVFLPIGLVLQ). Residues 1377 to 1396 (PWMGSAAMAASSVSVVLSSL) form a helical membrane-spanning segment. The Cytoplasmic segment spans residues 1397 to 1491 (FLKLYRKPTY…DFREDDDTTL (95 aa)). Ser-1421, Ser-1423, Ser-1451, Ser-1454, and Ser-1457 each carry phosphoserine. The Endocytosis signal motif lies at 1458–1459 (LL). Phosphoserine occurs at positions 1460, 1464, 1467, and 1477. The tract at residues 1477–1491 (SLLVGDFREDDDTTL) is PDZD11-binding. An Endocytosis signal motif is present at residues 1478 to 1479 (LL).

The protein belongs to the cation transport ATPase (P-type) (TC 3.A.3) family. Type IB subfamily. In terms of assembly, monomer. Interacts with PDZD11. Interacts with ATOX1 and COMMD1. Interacts with TYRP1. Directly interacts with SOD3; this interaction is copper-dependent and is required for SOD3 activity. In terms of tissue distribution, widely expressed. Highly expressed in pituitary endocrine cells. Expressed in melanocytes (at protein level). Expressed in motor neuron (at protein level). Expressed in hippocampal neuron (at protein level). In the kidney, it is detected in the proximal and distal tubules (at protein level). Expressed in aorta (at protein level).

The protein resides in the golgi apparatus. Its subcellular location is the trans-Golgi network membrane. It localises to the cell membrane. The protein localises to the melanosome membrane. It is found in the early endosome membrane. The protein resides in the cell projection. Its subcellular location is the axon. It localises to the dendrite. The protein localises to the postsynaptic density. It catalyses the reaction Cu(+)(in) + ATP + H2O = Cu(+)(out) + ADP + phosphate + H(+). Functionally, ATP-driven copper (Cu(+)) ion pump that plays an important role in intracellular copper ion homeostasis. Within a catalytic cycle, acquires Cu(+) ion from donor protein on the cytoplasmic side of the membrane and delivers it to acceptor protein on the lumenal side. The transfer of Cu(+) ion across the membrane is coupled to ATP hydrolysis and is associated with a transient phosphorylation that shifts the pump conformation from inward-facing to outward-facing state. Under physiological conditions, at low cytosolic copper concentration, it is localized at the trans-Golgi network (TGN) where it transfers Cu(+) ions to cuproenzymes of the secretory pathway. Upon elevated cytosolic copper concentrations, it relocalizes to the plasma membrane where it is responsible for the export of excess Cu(+) ions. May play a dual role in neuron function and survival by regulating cooper efflux and neuronal transmission at the synapse as well as by supplying Cu(+) ions to enzymes such as PAM, TYR and SOD3. In the melanosomes of pigmented cells, provides copper cofactor to TYR to form an active TYR holoenzyme for melanin biosynthesis. In Mus musculus (Mouse), this protein is Copper-transporting ATPase 1.